A 664-amino-acid chain; its full sequence is Putative peroxisomal acyl-coenzyme A oxidase 1.2 (664 aa).

399 to 404 (CGGHGY) contributes to the FAD binding site. Residues 662 to 664 (AKL) carry the Microbody targeting signal motif.

Belongs to the acyl-CoA oxidase family. The cofactor is FAD.

It is found in the peroxisome. It catalyses the reaction a 2,3-saturated acyl-CoA + O2 = a (2E)-enoyl-CoA + H2O2. Its function is as follows. Catalyzes the desaturation of acyl-CoAs to 2-trans-enoyl-CoAs. This chain is Putative peroxisomal acyl-coenzyme A oxidase 1.2 (ACX1.2), found in Arabidopsis thaliana (Mouse-ear cress).